A 139-amino-acid polypeptide reads, in one-letter code: Large ribosomal subunit protein uL16 (139 aa).

Residues 1 to 16 (MLIPKRTKYRKQHRPV) are compositionally biased toward basic residues. The tract at residues 1–22 (MLIPKRTKYRKQHRPVRSGMSK) is disordered.

The protein belongs to the universal ribosomal protein uL16 family. As to quaternary structure, part of the 50S ribosomal subunit.

Binds 23S rRNA and is also seen to make contacts with the A and possibly P site tRNAs. The polypeptide is Large ribosomal subunit protein uL16 (Bifidobacterium longum subsp. infantis (strain ATCC 15697 / DSM 20088 / JCM 1222 / NCTC 11817 / S12)).